The primary structure comprises 264 residues: [LysW]-aminoadipate/[LysW]-glutamate kinase (264 aa).

Substrate-binding positions include 35–36, arginine 62, and asparagine 167; that span reads GG.

This sequence belongs to the acetylglutamate kinase family. LysZ subfamily.

It is found in the cytoplasm. It carries out the reaction [amino-group carrier protein]-C-terminal-N-(1,4-dicarboxybutan-1-yl)-L-glutamine + ATP = [amino-group carrier protein]-C-terminal-N-(1-carboxy-5-phosphooxy-5-oxopentan-1-yl)-L-glutamine + ADP. The enzyme catalyses [amino-group carrier protein]-C-terminal-gamma-(L-glutamyl)-L-glutamate + ATP = [amino-group carrier protein]-C-terminal-gamma-(5-phospho-L-glutamyl)-L-glutamate + ADP. The protein operates within amino-acid biosynthesis; L-lysine biosynthesis via AAA pathway; L-lysine from L-alpha-aminoadipate (Thermus route): step 2/5. Its pathway is amino-acid biosynthesis; L-arginine biosynthesis. Its function is as follows. Involved in both the arginine and lysine biosynthetic pathways. Phosphorylates the LysW-bound precursors glutamate (for arginine biosynthesis), respectively alpha-aminoadipate (for lysine biosynthesis). This is [LysW]-aminoadipate/[LysW]-glutamate kinase from Saccharolobus solfataricus (strain ATCC 35092 / DSM 1617 / JCM 11322 / P2) (Sulfolobus solfataricus).